The sequence spans 507 residues: Maturase K (507 aa).

Belongs to the intron maturase 2 family. MatK subfamily.

The protein resides in the plastid. It localises to the chloroplast. In terms of biological role, usually encoded in the trnK tRNA gene intron. Probably assists in splicing its own and other chloroplast group II introns. The chain is Maturase K from Cupaniopsis anacardioides (Carrotwood).